The primary structure comprises 253 residues: 3-deoxy-manno-octulosonate cytidylyltransferase (253 aa).

Belongs to the KdsB family.

It localises to the cytoplasm. The enzyme catalyses 3-deoxy-alpha-D-manno-oct-2-ulosonate + CTP = CMP-3-deoxy-beta-D-manno-octulosonate + diphosphate. It functions in the pathway nucleotide-sugar biosynthesis; CMP-3-deoxy-D-manno-octulosonate biosynthesis; CMP-3-deoxy-D-manno-octulosonate from 3-deoxy-D-manno-octulosonate and CTP: step 1/1. The protein operates within bacterial outer membrane biogenesis; lipopolysaccharide biosynthesis. Activates KDO (a required 8-carbon sugar) for incorporation into bacterial lipopolysaccharide in Gram-negative bacteria. This Neisseria meningitidis serogroup B (strain ATCC BAA-335 / MC58) protein is 3-deoxy-manno-octulosonate cytidylyltransferase.